The chain runs to 121 residues: Transposase InsC for insertion element IS2A (121 aa).

The protein belongs to the transposase 8 family.

Involved in the transposition of the insertion sequence IS2. This Escherichia coli (strain K12) protein is Transposase InsC for insertion element IS2A (insC1).